The sequence spans 572 residues: Proline--tRNA ligase (572 aa).

The protein belongs to the class-II aminoacyl-tRNA synthetase family. ProS type 1 subfamily. Homodimer.

The protein localises to the cytoplasm. The enzyme catalyses tRNA(Pro) + L-proline + ATP = L-prolyl-tRNA(Pro) + AMP + diphosphate. In terms of biological role, catalyzes the attachment of proline to tRNA(Pro) in a two-step reaction: proline is first activated by ATP to form Pro-AMP and then transferred to the acceptor end of tRNA(Pro). As ProRS can inadvertently accommodate and process non-cognate amino acids such as alanine and cysteine, to avoid such errors it has two additional distinct editing activities against alanine. One activity is designated as 'pretransfer' editing and involves the tRNA(Pro)-independent hydrolysis of activated Ala-AMP. The other activity is designated 'posttransfer' editing and involves deacylation of mischarged Ala-tRNA(Pro). The misacylated Cys-tRNA(Pro) is not edited by ProRS. In Leuconostoc mesenteroides subsp. mesenteroides (strain ATCC 8293 / DSM 20343 / BCRC 11652 / CCM 1803 / JCM 6124 / NCDO 523 / NBRC 100496 / NCIMB 8023 / NCTC 12954 / NRRL B-1118 / 37Y), this protein is Proline--tRNA ligase.